Here is a 615-residue protein sequence, read N- to C-terminus: Alpha-fetoprotein (615 aa).

A signal peptide spans 1-15 (MAVLPLSGAIRLSRG). The short motif at 14–16 (RGD) is the Cell attachment site element. 3 Albumin domains span residues 27–218 (WAKK…RRQA), 223–415 (KPIR…ELKK), and 416–609 (HIYE…VLVT). 2 disulfides stabilise this stretch: cysteine 109-cysteine 121 and cysteine 120-cysteine 131. N-linked (GlcNAc...) asparagine glycosylation is found at asparagine 137 and asparagine 157. 9 disulfides stabilise this stretch: cysteine 155-cysteine 200, cysteine 199-cysteine 213, cysteine 236-cysteine 282, cysteine 281-cysteine 289, cysteine 301-cysteine 315, cysteine 314-cysteine 325, cysteine 396-cysteine 405, cysteine 428-cysteine 458, and cysteine 457-cysteine 468. Residues 283-285 (RGD) carry the Cell attachment site motif. The N-linked (GlcNAc...) asparagine glycan is linked to asparagine 472. 4 disulfide bridges follow: cysteine 485/cysteine 501, cysteine 500/cysteine 511, cysteine 538/cysteine 593, and cysteine 592/cysteine 601.

It belongs to the ALB/AFP/VDB family. As to quaternary structure, dimeric and trimeric forms have been found in addition to the monomeric form. Post-translationally, sulfated.

The protein localises to the secreted. Its function is as follows. Binds copper, nickel, and fatty acids as well as, and bilirubin less well than, serum albumin. This is Alpha-fetoprotein (AFP) from Gallus gallus (Chicken).